The sequence spans 380 residues: Cytochrome b (380 aa).

4 consecutive transmembrane segments (helical) span residues 34-54 (FGSL…LLAM), 78-99 (WLIR…YLHI), 114-134 (WNTG…GYVL), and 179-199 (FFAL…IHLT). Heme b contacts are provided by His84 and His98. Heme b is bound by residues His183 and His197. His202 contributes to the a ubiquinone binding site. 4 helical membrane-spanning segments follow: residues 227-247 (LKDI…ALFS), 289-309 (LGGV…PFLH), 321-341 (LSQL…WVGS), and 348-368 (FIII…ILFP).

It belongs to the cytochrome b family. The cytochrome bc1 complex contains 11 subunits: 3 respiratory subunits (MT-CYB, CYC1 and UQCRFS1), 2 core proteins (UQCRC1 and UQCRC2) and 6 low-molecular weight proteins (UQCRH/QCR6, UQCRB/QCR7, UQCRQ/QCR8, UQCR10/QCR9, UQCR11/QCR10 and a cleavage product of UQCRFS1). This cytochrome bc1 complex then forms a dimer. Requires heme b as cofactor.

It localises to the mitochondrion inner membrane. Its function is as follows. Component of the ubiquinol-cytochrome c reductase complex (complex III or cytochrome b-c1 complex) that is part of the mitochondrial respiratory chain. The b-c1 complex mediates electron transfer from ubiquinol to cytochrome c. Contributes to the generation of a proton gradient across the mitochondrial membrane that is then used for ATP synthesis. In Daption capense (Cape petrel), this protein is Cytochrome b (MT-CYB).